An 86-amino-acid chain; its full sequence is High affinity immunoglobulin epsilon receptor subunit gamma (86 aa).

A signal peptide spans 1-18; the sequence is MYPAVVLLLLLLVEQAAA. Residues 19–23 are Extracellular-facing; that stretch reads LGEPQ. Residues 24-44 traverse the membrane as a helical segment; it reads LCYILDAILFLYGIILTLLYC. Topologically, residues 45–86 are cytoplasmic; sequence RLKIQVRKATVASYEKPDGIYTGLSTRNQETYETLKHEKPPQ. Residues 54 to 82 enclose the ITAM domain; the sequence is TVASYEKPDGIYTGLSTRNQETYETLKHE. Tyr-65 bears the Phosphotyrosine mark. Phosphoserine is present on Ser-69. Position 76 is a phosphotyrosine (Tyr-76). Thr-78 carries the phosphothreonine modification.

The protein belongs to the CD3Z/FCER1G family. In terms of assembly, igE Fc receptor is a tetramer of an alpha chain, a beta chain, and two disulfide linked gamma chains. Associates with FCGR1A; forms a functional signaling complex. The signaling subunit of immunoglobulin gamma (IgG) Fc receptor complex. As a homodimer or a heterodimer of CD247 and FCER1G, associates with the ligand binding subunit FCGR3A to form a functional receptor complex. Associates with CLEC6A. Interacts with CLEC4E. Interacts (via ITAM domain) with SYK (via SH2 domains); activates SYK, enabling integrin-mediated activation of neutrophils and macrophages. Interacts with CSF2RB and recruits SYK in response to IL3 stimulation; this interaction is direct. Interacts with CD300LH; the interaction may be indirect. Interacts with CD300LD. Interacts with TARM1.

It localises to the cell membrane. Adapter protein containing an immunoreceptor tyrosine-based activation motif (ITAM) that transduces activation signals from various immunoreceptors. As a component of the high-affinity immunoglobulin E (IgE) receptor, mediates allergic inflammatory signaling in mast cells. As a constitutive component of interleukin-3 receptor complex, selectively mediates interleukin 4/IL4 production by basophils priming T-cells toward effector T-helper 2 subset. Associates with pattern recognition receptors CLEC4D and CLEC4E to form a functional signaling complex in myeloid cells. Binding of mycobacterial trehalose 6,6'-dimycolate (TDM) to this receptor complex leads to phosphorylation of ITAM, triggering activation of SYK, CARD9 and NF-kappa-B, consequently driving maturation of antigen-presenting cells and shaping antigen-specific priming of T-cells toward effector T-helper 1 and T-helper 17 cell subtypes. May function cooperatively with other activating receptors. Functionally linked to integrin beta-2/ITGB2-mediated neutrophil activation. Also involved in integrin alpha-2/ITGA2-mediated platelet activation. In Cavia porcellus (Guinea pig), this protein is High affinity immunoglobulin epsilon receptor subunit gamma (FCER1G).